The following is a 610-amino-acid chain: MRFRHKAAALAATLALPLAGLVGLASPAQAATSATATFQKTSDWGTGFGGKWTVKNTGTTSLSSWTVEWDFPSGTKVTSAWDATVTNSADHWTAKNVGWNGTLAPGASVSFGFNGSGPGSPSGCKINGGSCDGSSVPGDEAPSAPGTPTASNITDTSVKLSWSAATDDKGVKNYDVLRDGATVATVTGTTYTDNGLTKGTDYSYSVKARDTGDQTGPASGSVKVTTTGGDGGEPNPNPGAEVKMGYFTNWGVYGRNYHVKNLVTSGSAEKITHINLRFGNVQGGKCTIGDAYADYDKAYTADQSVDGVADTWDQPLRANFNQLRNLKAEYPHIKILYSFGGWTWSGGFPDAVKNPAAFAKSCHDLVEDPRWADVFDGIDLDWEYPNACGLSCDETSAPNAFSSMMKAMRAEFGQDYLITAAVTADGSDGGKIDAADYGEASKYIDWYNVMTYDFFGAWAKNGPTAPHSPLNAYDGIPQQGFTTADAMAKFKSKGVPADKLLIGIGFYGRGWTGVTQSAPGGTATGPAAGTYEAGIEDYKVLKNSCPATGTVAGTAYAHCGTNWWSYDTPATIKSKMDWAEQQGLGGAFFWEFSGDTTNGELVSAIDSGLK.

The N-terminal stretch at 1 to 30 (MRFRHKAAALAATLALPLAGLVGLASPAQA) is a signal peptide. The CBM2 domain occupies 31-134 (ATSATATFQK…KINGGSCDGS (104 aa)). Disordered stretches follow at residues 125-153 (KING…ASNI) and 208-239 (ARDT…PNPG). A Fibronectin type-III domain is found at 144 to 229 (APGTPTASNI…GSVKVTTTGG (86 aa)). The span at 213–224 (DQTGPASGSVKV) shows a compositional bias: polar residues. A GH18 domain is found at 241 to 610 (EVKMGYFTNW…LVSAIDSGLK (370 aa)). Chitin-binding positions include 313–314 (DQ) and 340–343 (GGWT). The active-site Proton donor is E383. Chitin is bound by residues Y384, 450–453 (MTYD), and W590.

It belongs to the glycosyl hydrolase 18 family. Chitinase class II subfamily.

It catalyses the reaction Random endo-hydrolysis of N-acetyl-beta-D-glucosaminide (1-&gt;4)-beta-linkages in chitin and chitodextrins.. The protein is Chitinase 63 (chtA) of Streptomyces plicatus.